Consider the following 355-residue polypeptide: Peptide chain release factor 1 (355 aa).

Residue Q230 is modified to N5-methylglutamine.

It belongs to the prokaryotic/mitochondrial release factor family. Post-translationally, methylated by PrmC. Methylation increases the termination efficiency of RF1.

The protein resides in the cytoplasm. In terms of biological role, peptide chain release factor 1 directs the termination of translation in response to the peptide chain termination codons UAG and UAA. This chain is Peptide chain release factor 1, found in Geobacter sulfurreducens (strain ATCC 51573 / DSM 12127 / PCA).